Reading from the N-terminus, the 84-residue chain is Putative antitoxin RelB4 (84 aa).

Antitoxin component of a type II toxin-antitoxin (TA) system. Its cognate toxin is RelE4 (Potential). In Methanocaldococcus jannaschii (strain ATCC 43067 / DSM 2661 / JAL-1 / JCM 10045 / NBRC 100440) (Methanococcus jannaschii), this protein is Putative antitoxin RelB4 (relB4).